Here is a 239-residue protein sequence, read N- to C-terminus: Large ribosomal subunit protein bL25 (239 aa).

The disordered stretch occupies residues lysine 211–lysine 239. Residues serine 226 to lysine 239 show a composition bias toward polar residues.

This sequence belongs to the bacterial ribosomal protein bL25 family. CTC subfamily. As to quaternary structure, part of the 50S ribosomal subunit; part of the 5S rRNA/L5/L18/L25 subcomplex. Contacts the 5S rRNA. Binds to the 5S rRNA independently of L5 and L18.

This is one of the proteins that binds to the 5S RNA in the ribosome where it forms part of the central protuberance. The sequence is that of Large ribosomal subunit protein bL25 from Endomicrobium trichonymphae.